Consider the following 85-residue polypeptide: High affinity immunoglobulin epsilon receptor subunit gamma (85 aa).

The N-terminal stretch at 1-18 (MIPAVVLLLLLLVEQAAA) is a signal peptide. Residues 19–23 (LGEPQ) are Extracellular-facing. A helical membrane pass occupies residues 24–44 (LCYILDAILFLYGIVLTLLYC). Topologically, residues 45-85 (RLKLQVRKAATASEKSDGIYTGLSTRTQETYETLKHEKPPQ) are cytoplasmic. An ITAM domain is found at 53-81 (AATASEKSDGIYTGLSTRTQETYETLKHE). At Tyr64 the chain carries Phosphotyrosine. A Phosphoserine modification is found at Ser68. Phosphotyrosine is present on Tyr75. Phosphothreonine is present on Thr77.

This sequence belongs to the CD3Z/FCER1G family. IgE Fc receptor is a tetramer of an alpha chain, a beta chain, and two disulfide linked gamma chains. Associates with FCGR1A; forms a functional signaling complex. The signaling subunit of immunoglobulin gamma (IgG) Fc receptor complex. As a homodimer or a heterodimer of CD247 and FCER1G, associates with the ligand binding subunit FCGR3A to form a functional receptor complex. Associates with CLEC6A. Interacts with CLEC4E. Interacts (via ITAM domain) with SYK (via SH2 domains); activates SYK, enabling integrin-mediated activation of neutrophils and macrophages. Interacts with CSF2RB and recruits SYK in response to IL3 stimulation; this interaction is direct. Interacts with CD300LH; the interaction may be indirect. Interacts with CD300LD. Interacts with TARM1.

The protein localises to the cell membrane. Its function is as follows. Adapter protein containing an immunoreceptor tyrosine-based activation motif (ITAM) that transduces activation signals from various immunoreceptors. As a component of the high-affinity immunoglobulin E (IgE) receptor, mediates allergic inflammatory signaling in mast cells. As a constitutive component of interleukin-3 receptor complex, selectively mediates interleukin 4/IL4 production by basophils priming T-cells toward effector T-helper 2 subset. Associates with pattern recognition receptors CLEC4D and CLEC4E to form a functional signaling complex in myeloid cells. Binding of mycobacterial trehalose 6,6'-dimycolate (TDM) to this receptor complex leads to phosphorylation of ITAM, triggering activation of SYK, CARD9 and NF-kappa-B, consequently driving maturation of antigen-presenting cells and shaping antigen-specific priming of T-cells toward effector T-helper 1 and T-helper 17 cell subtypes. May function cooperatively with other activating receptors. Functionally linked to integrin beta-2/ITGB2-mediated neutrophil activation. Also involved in integrin alpha-2/ITGA2-mediated platelet activation. The chain is High affinity immunoglobulin epsilon receptor subunit gamma (FCER1G) from Bos taurus (Bovine).